A 105-amino-acid polypeptide reads, in one-letter code: Putative toxin MazF8 (105 aa).

In terms of assembly, forms a complex with cognate antitoxin MazE8.

Its function is as follows. Putative toxic component of a type II toxin-antitoxin (TA) system. Acts as an endoribonuclease. Neutralized by coexpression with cognate antitoxin MazE8. The protein is Putative toxin MazF8 (mazF8) of Mycobacterium tuberculosis (strain CDC 1551 / Oshkosh).